Consider the following 225-residue polypeptide: Urease accessory protein UreF (225 aa).

Belongs to the UreF family. As to quaternary structure, ureD, UreF and UreG form a complex that acts as a GTP-hydrolysis-dependent molecular chaperone, activating the urease apoprotein by helping to assemble the nickel containing metallocenter of UreC. The UreE protein probably delivers the nickel.

It is found in the cytoplasm. Required for maturation of urease via the functional incorporation of the urease nickel metallocenter. In Geobacillus kaustophilus (strain HTA426), this protein is Urease accessory protein UreF.